Consider the following 4555-residue polypeptide: Protocadherin Fat 3 (4555 aa).

The first 31 residues, 1-31, serve as a signal peptide directing secretion; it reads MGVTMRHCIDTRPPSCLIFLLLKLCATVSQG. The Extracellular portion of the chain corresponds to 32–4153; sequence LPGTGPLGFH…AGHSYVGKEE (4122 aa). 33 Cadherin domains span residues 43–157, 158–265, 263–374, 376–471, 472–577, 578–680, 726–830, 831–935, 936–1042, 1043–1147, 1148–1253, 1254–1358, 1362–1459, 1460–1565, 1566–1768, 1769–1882, 1883–1985, 1982–2083, 2084–2185, 2186–2286, 2287–2393, 2394–2495, 2496–2599, 2600–2707, 2708–2813, 2814–2923, 2924–3028, 3029–3130, 3131–3235, 3236–3340, 3341–3445, 3446–3550, and 3551–3652; these read THAL…RPLF, SPTT…APII, PIIH…TPIK, EKDV…TPEF, QETL…SPLF, EKVA…SKSF, KSFP…SPVF, LQDS…SPAF, IPSS…TPYF, PDFA…APLT, SEPI…KPQF, PEKV…SPIP, DEPF…GPEF, SQPH…SPYF, TNPL…PPVF, LFSQ…PPVF, TQAV…TQSF, TQSF…SPVF, VGLP…MPVF, DKPF…PPVF, DQPT…PPVF, NQLI…SPAF, SQST…APQF, MTLE…LPSF, TQSQ…KPVF, ETSS…APVF, AHEV…SPVC, DQVA…PPVF, SSNH…PPVF, ERRD…PPRF, SQDV…SPVF, TPAN…KPTA, and IPLE…TIRF. Asparagine 48 is a glycosylation site (N-linked (GlcNAc...) asparagine). N-linked (GlcNAc...) asparagine glycosylation occurs at asparagine 341. N-linked (GlcNAc...) asparagine glycans are attached at residues asparagine 481, asparagine 562, asparagine 667, asparagine 799, asparagine 879, asparagine 898, and asparagine 1006. 2 N-linked (GlcNAc...) asparagine glycosylation sites follow: asparagine 1367 and asparagine 1429. A glycan (N-linked (GlcNAc...) asparagine) is linked at asparagine 1751. Asparagine 1944, asparagine 1993, and asparagine 1996 each carry an N-linked (GlcNAc...) asparagine glycan. N-linked (GlcNAc...) asparagine glycans are attached at residues asparagine 2208, asparagine 2292, asparagine 2331, and asparagine 2467. An N-linked (GlcNAc...) asparagine glycan is attached at asparagine 2734. N-linked (GlcNAc...) asparagine glycosylation is present at asparagine 3000. Residue asparagine 3201 is glycosylated (N-linked (GlcNAc...) asparagine). 3 N-linked (GlcNAc...) asparagine glycosylation sites follow: asparagine 3449, asparagine 3618, and asparagine 3741. Positions 3794–3832 constitute an EGF-like 1 domain; that stretch reads SNDPCVEKPCPEDMQCVGYEASRRPFLCQCPPGKLGECS. 3 disulfide bridges follow: cysteine 3798–cysteine 3809, cysteine 3803–cysteine 3821, and cysteine 3823–cysteine 3831. One can recognise a Laminin G-like domain in the interval 3834 to 4017; it reads HTSLSFAGNS…VGLTELKLGC (184 aa). A glycan (N-linked (GlcNAc...) asparagine) is linked at asparagine 3926. Disulfide bonds link cysteine 3984/cysteine 4017, cysteine 4024/cysteine 4035, cysteine 4029/cysteine 4045, cysteine 4047/cysteine 4056, cysteine 4063/cysteine 4074, cysteine 4068/cysteine 4083, cysteine 4085/cysteine 4094, cysteine 4101/cysteine 4112, cysteine 4106/cysteine 4121, and cysteine 4123/cysteine 4132. EGF-like domains lie at 4020–4057 and 4059–4095; these read YPDA…TNCE and EITA…VTCE. Positions 4097 to 4133 constitute an EGF-like 4; calcium-binding domain; that stretch reads DVDECEREECENGGSCVNLFGSFFCNCTPGYVGQYCG. The helical transmembrane segment at 4154 to 4174 threads the bilayer; sequence LIGIAVVLFVIFTLIVLFIVF. Over 4175-4555 the chain is Cytoplasmic; it reads RKKVFRKNYS…FVETQHQTQV (381 aa). Residues 4326-4343 show a composition bias toward polar residues; sequence SNKGSNSEVQSLNSFQSD. Disordered stretches follow at residues 4326–4347, 4395–4424, and 4452–4472; these read SNKG…SGDD, GGYD…LPED, and PRFH…TDLG. 2 positions are modified to omega-N-methylarginine: arginine 4508 and arginine 4518.

Restricted to the nervous system. Abundantly expressed in the fetal brain.

It localises to the membrane. May play a role in the interactions between neurites derived from specific subsets of neurons during development. The chain is Protocadherin Fat 3 (Fat3) from Rattus norvegicus (Rat).